A 332-amino-acid chain; its full sequence is Ketol-acid reductoisomerase (NADP(+)) (332 aa).

Positions 1-182 constitute a KARI N-terminal Rossmann domain; the sequence is MATIYYEKDA…GCTRAGVLAT (182 aa). NADP(+)-binding positions include 25 to 28, arginine 48, serine 53, and 83 to 86; these read YGSQ and DELQ. The active site involves histidine 108. Glycine 134 is an NADP(+) binding site. Residues 183 to 328 form the KARI C-terminal knotted domain; it reads TFKEETETDL…KELRSMMPWL (146 aa). The Mg(2+) site is built by aspartate 191, glutamate 195, glutamate 227, and glutamate 231. Serine 252 provides a ligand contact to substrate.

The protein belongs to the ketol-acid reductoisomerase family. Mg(2+) serves as cofactor.

The enzyme catalyses (2R)-2,3-dihydroxy-3-methylbutanoate + NADP(+) = (2S)-2-acetolactate + NADPH + H(+). The catalysed reaction is (2R,3R)-2,3-dihydroxy-3-methylpentanoate + NADP(+) = (S)-2-ethyl-2-hydroxy-3-oxobutanoate + NADPH + H(+). Its pathway is amino-acid biosynthesis; L-isoleucine biosynthesis; L-isoleucine from 2-oxobutanoate: step 2/4. The protein operates within amino-acid biosynthesis; L-valine biosynthesis; L-valine from pyruvate: step 2/4. Functionally, involved in the biosynthesis of branched-chain amino acids (BCAA). Catalyzes an alkyl-migration followed by a ketol-acid reduction of (S)-2-acetolactate (S2AL) to yield (R)-2,3-dihydroxy-isovalerate. In the isomerase reaction, S2AL is rearranged via a Mg-dependent methyl migration to produce 3-hydroxy-3-methyl-2-ketobutyrate (HMKB). In the reductase reaction, this 2-ketoacid undergoes a metal-dependent reduction by NADPH to yield (R)-2,3-dihydroxy-isovalerate. The sequence is that of Ketol-acid reductoisomerase (NADP(+)) from Methanocella arvoryzae (strain DSM 22066 / NBRC 105507 / MRE50).